The chain runs to 327 residues: Phenylalanine--tRNA ligase alpha subunit (327 aa).

Mg(2+) is bound at residue E252.

It belongs to the class-II aminoacyl-tRNA synthetase family. Phe-tRNA synthetase alpha subunit type 1 subfamily. In terms of assembly, tetramer of two alpha and two beta subunits. Requires Mg(2+) as cofactor.

Its subcellular location is the cytoplasm. It carries out the reaction tRNA(Phe) + L-phenylalanine + ATP = L-phenylalanyl-tRNA(Phe) + AMP + diphosphate + H(+). The sequence is that of Phenylalanine--tRNA ligase alpha subunit from Shigella sonnei (strain Ss046).